The sequence spans 53 residues: Conotoxin Ac4.3b (53 aa).

Positions 1-11 are excised as a propeptide; the sequence is SDVRNAAVHER. The residue at position 12 (Q12) is a Pyrrolidone carboxylic acid. The residue at position 14 (E14) is a 4-carboxyglutamate. O-linked (HexNAc...) serine glycosylation occurs at S18. 3 positions are modified to 4-hydroxyproline: P28, P33, and P48. Residue P48 is modified to Proline amide. A propeptide spanning residues 49–53 is cleaved from the precursor; it reads GRRND.

It belongs to the conotoxin A superfamily. Post-translationally, contains 3 disulfide bonds. Expressed by the venom duct.

The protein resides in the secreted. Probable neurotoxin with ion channel inhibitor activity. The sequence is that of Conotoxin Ac4.3b from Conus achatinus (Little frog cone).